A 472-amino-acid chain; its full sequence is Tryptophan--tRNA ligase, cytoplasmic (472 aa).

Residues 9 to 65 (SPLELFNSIATQGELVRSLKAGNASKDEIDSAVKMLLSLKMSYKAAMGEDYKANCPP) form the WHEP-TRS domain. K155 carries the post-translational modification N6-succinyllysine. A 'HIGH' region motif is present at residues 165-174 (PSSEAMHVGH). A 'KMSKS' region motif is present at residues 350 to 354 (KMSAS). S352 is modified (phosphoserine).

Belongs to the class-I aminoacyl-tRNA synthetase family. In terms of assembly, homodimer. Interacts with oxidized form of GAPDH. In terms of processing, proteolytic cleavage generates 2 forms; T1-TrpRS and T2-TrpRS.

It is found in the cytoplasm. The enzyme catalyses tRNA(Trp) + L-tryptophan + ATP = L-tryptophyl-tRNA(Trp) + AMP + diphosphate + H(+). Its function is as follows. Catalyzes the attachment of tryptophan to tRNA(Trp) in a two-step reaction: tryptophan is first activated by ATP to form Trp-AMP and then transferred to the acceptor end of the tRNA(Trp). Could also possess an angiostatic activity. This chain is Tryptophan--tRNA ligase, cytoplasmic (WARS1), found in Pongo abelii (Sumatran orangutan).